Here is a 261-residue protein sequence, read N- to C-terminus: DNA repair protein RecO (261 aa).

It belongs to the RecO family.

In terms of biological role, involved in DNA repair and RecF pathway recombination. This is DNA repair protein RecO from Gloeobacter violaceus (strain ATCC 29082 / PCC 7421).